Here is a 421-residue protein sequence, read N- to C-terminus: 4-hydroxy-3-methylbut-2-en-1-yl diphosphate synthase (flavodoxin) (421 aa).

4 residues coordinate [4Fe-4S] cluster: Cys311, Cys314, Cys357, and Glu364.

Belongs to the IspG family. The cofactor is [4Fe-4S] cluster.

It catalyses the reaction (2E)-4-hydroxy-3-methylbut-2-enyl diphosphate + oxidized [flavodoxin] + H2O + 2 H(+) = 2-C-methyl-D-erythritol 2,4-cyclic diphosphate + reduced [flavodoxin]. Its pathway is isoprenoid biosynthesis; isopentenyl diphosphate biosynthesis via DXP pathway; isopentenyl diphosphate from 1-deoxy-D-xylulose 5-phosphate: step 5/6. Functionally, converts 2C-methyl-D-erythritol 2,4-cyclodiphosphate (ME-2,4cPP) into 1-hydroxy-2-methyl-2-(E)-butenyl 4-diphosphate. In Xanthomonas axonopodis pv. citri (strain 306), this protein is 4-hydroxy-3-methylbut-2-en-1-yl diphosphate synthase (flavodoxin).